The primary structure comprises 183 residues: Ribosome rescue factor SmrB (183 aa).

Residues 98 to 173 (LDLHGLTQQQ…GDAALLVLIE (76 aa)) enclose the Smr domain.

This sequence belongs to the SmrB family. In terms of assembly, associates with collided ribosomes, but not with correctly translating polysomes.

In terms of biological role, acts as a ribosome collision sensor. Detects stalled/collided disomes (pairs of ribosomes where the leading ribosome is stalled and a second ribosome has collided with it) and endonucleolytically cleaves mRNA at the 5' boundary of the stalled ribosome. Stalled/collided disomes form a new interface (primarily via the 30S subunits) that binds SmrB. Cleaved mRNA becomes available for tmRNA ligation, leading to ribosomal subunit dissociation and rescue of stalled ribosomes. The sequence is that of Ribosome rescue factor SmrB from Klebsiella pneumoniae (strain 342).